Reading from the N-terminus, the 538-residue chain is Cytochrome P450 monooxygenase fogE (538 aa).

The chain crosses the membrane as a helical span at residues 4 to 24 (ASSAILLVALIAALWRLSLIG). Cys-437 provides a ligand contact to heme.

It belongs to the cytochrome P450 family. The cofactor is heme.

It localises to the membrane. The protein operates within secondary metabolite biosynthesis. Cytochrome P450 monooxygenase; part of the gene cluster that mediates the biosynthesis of flavoglaucin and congeners (including aspergin, dihydroauroglaucin and auroglaucin), prenylated salicylaldehyde derivatives carrying a saturated or an unsaturated C-7 side chain. The PKS fogA releases the carboxylic acid (8E,10E,12E)-3,5,7-trihydroxytetradeca-8,10,12-trienoic acid as its product, as well as derivatives with one and two double bonds. FogA is indeed able to reduce the initial triketide, thus being at least partially responsible for the differently saturated heptyl side chains of flavoglaucin congeners. The oxidoreductases fogB, fogC and fogD modify the nascent polyketide in fogA-bound form and, together, fogA, fogB, fogC and fogD are necessary for the formation of the aromatic core and the cyclized PKS products are released as salicyl alcohols. In particular, fogB is responsible for oxidation of a hydroxyl group or reduction of remaining double bond(s) at the C-7 residue whereas fogD is probably involved in the reductive release of the modified PKS products. The cytochrome P450 monooxygenase fogE is then responsible for the hydroxylation at C-3 of the benzene ring. The fogE products are substrates of the prenyltransferase fogH and the prenylated benzyl alcohols are subsequently oxidized by the fogF to produce the final aryl aldehydes flavoglaucin and congeners. The short-chain dehydrogenase fogG does not seem to be involved in the biosynthesis of the prenylated salicylaldehyde derivatives. The protein is Cytochrome P450 monooxygenase fogE of Aspergillus ruber (strain CBS 135680).